Consider the following 1059-residue polypeptide: Potassium transporter TRK1 (1059 aa).

Residues 1 to 46 are Cytoplasmic-facing; sequence MLYRVSGFYKRHTRNFTNIDYGYYIRNFIHHIASKIYPYAKVVLPN. A helical transmembrane segment spans residues 47 to 67; sequence FRAAHYFYILTLVILGSILVY. The Extracellular portion of the chain corresponds to 68 to 73; the sequence is PVKTCA. Residues 74–90 lie within the membrane without spanning it; it reads YIDVLFFTAGASTQAGL. The Extracellular portion of the chain corresponds to 91-99; that stretch reads NTVNVNDLS. The helical transmembrane segment at 100 to 122 threads the bilayer; sequence LYQQIVLYLLATLATPIFIHGSL. The Cytoplasmic segment spans residues 123 to 625; that stretch reads LFVRLYYFER…LGGIEYRAVK (503 aa). Disordered stretches follow at residues 180–276, 304–350, and 404–574; these read REAE…IDPE, IGSP…EDED, and PWTS…SIEN. Positions 186–203 are enriched in low complexity; sequence SSSSPQSSSSQTSQPVST. Residues 236–245 show a composition bias toward basic and acidic residues; sequence EKIHFEEPQR. Positions 335–344 are enriched in polar residues; sequence PATNSVGTGN. Residues 412–423 are compositionally biased toward low complexity; it reads TLSNSSKKGSLS. Acidic residues-rich tracts occupy residues 428-449 and 469-490; these read DTED…SDIS and YEED…DDGE. The span at 524–536 shows a compositional bias: polar residues; it reads RSNTLDTPQQNTS. Positions 540–552 are enriched in basic residues; it reads KIRKKAPKRKTPR. Residues 556-566 are compositionally biased toward polar residues; sequence NASFNQHSNVS. The chain crosses the membrane as a helical span at residues 626–649; sequence LLIKIIVVYYVGFNIIPGVMLSIW. At 650-668 the chain is on the extracellular side; it reads IYCMPHYKNLMISSSISPA. Residues 669–685 lie within the membrane without spanning it; sequence WWAFFTSQSSFNDLGLT. Residues 686-696 are Extracellular-facing; that stretch reads LTSNSMMSFNQ. The helical transmembrane segment at 697–713 threads the bilayer; it reads NAFVQILCSFLIVIGNT. At 714–757 the chain is on the cytoplasmic side; sequence GFPILLRFIIWVMFKTARPLSLYKESLGFLLDHPRRCFTLLFPS. The chain crosses the membrane as a helical span at residues 758–781; it reads VPTWWLFFILVVLNGFDLVIFCIL. The Extracellular segment spans residues 782–796; that stretch reads DLHDDTFKGVDMGYR. Residues 797–813 lie within the membrane without spanning it; sequence VLNGLFQAFCTRTVGFS. Residues 814–820 lie on the Extracellular side of the membrane; the sequence is VMDLSQL. A helical membrane pass occupies residues 821 to 844; that stretch reads HAATQVSYLIMMYISVLPIAISVR. Residues 845 to 877 are Cytoplasmic-facing; it reads RTNVYEEQSLGVYAKENAEGVDESAPSNYVGSH. Residues 878 to 899 traverse the membrane as a helical segment; it reads LRNQLSYDLWYICLGLFIICIA. The Extracellular segment spans residues 900–912; that stretch reads EGKRLKEQDLRFS. Residues 913 to 931 lie within the membrane without spanning it; it reads IFAVLFEIVSAYGTVGMSM. Residues 932–945 lie on the Extracellular side of the membrane; the sequence is GYPGVDCSLSGEFN. A helical membrane pass occupies residues 946–968; that stretch reads VISKLVIIAMMIRGRHRGLPYTI. The Cytoplasmic portion of the chain corresponds to 969–1059; that stretch reads DRAIMLPNAA…RYVVRTVSEV (91 aa).

It belongs to the TrkH potassium transport family.

Its subcellular location is the cell membrane. It catalyses the reaction K(+)(in) = K(+)(out). It carries out the reaction chloride(in) = chloride(out). With respect to regulation, TRK1-mediated chloride conductance is blocked by 4,4'-diisothiocyanatostilbene-2,2'-disulfonic acid. In terms of biological role, potassium transporter that mediates K(+) influx, as well as Cl(-) efflux as a secondary function. TRK1 is the major K(+) uptake transporter that regulates membrane potential and intracellular pH. The TRK1-mediated Cl(-) efflux should serve as a Cl(-) detoxification route and may play a role in sustaining C.albicans on mammalian epithelial surfaces, or in physiological saline solutions such as saliva. Its function is as follows. Mediates candidacidal activities of cysteine-free peptides, but not of defensins. The hallmark of salivary gland-secreted histatin-5 (Hst 5) killing of C.albicans is the rapid efflux of cellular ATP and other small nucleotides and ions from the cell as well as concurrent intracellular uptake of propidium iodide (PI). TRK1 is the channel for Hst 5-induced killing and histatin-5 may directly or indirectly alter TRK1 function, allowing the efflux of larger anions, including ATP, and the influx of small cationic dyes, such as PI. The protein is Potassium transporter TRK1 of Candida albicans (Yeast).